We begin with the raw amino-acid sequence, 239 residues long: MPAPVSRAHTSALVLFSGGQDSTTCLAQALAKYERVETIAFDYGQRHKVELQARLNVLRELKSQFPQWAAKLGEDHLLDLAVLGQVSDCSLTRDVAFKMESSGLPNTFVPGRNLLFLTLAAALAYRRDLQVLVTGVCETDFSGYPDCRDDTMKAMQLALSLGMDKRFLIETPLMWIDKADTWALAESLGGQPLVELIIEHTHTCYLGDRIHRHAWGYGCGQCPACELRARGYARYAEAA.

16 to 26 provides a ligand contact to ATP; the sequence is FSGGQDSTTCL. Residues C204, C219, C222, and C225 each coordinate Zn(2+).

Belongs to the QueC family. Zn(2+) is required as a cofactor.

The enzyme catalyses 7-carboxy-7-deazaguanine + NH4(+) + ATP = 7-cyano-7-deazaguanine + ADP + phosphate + H2O + H(+). The protein operates within purine metabolism; 7-cyano-7-deazaguanine biosynthesis. Its function is as follows. Catalyzes the ATP-dependent conversion of 7-carboxy-7-deazaguanine (CDG) to 7-cyano-7-deazaguanine (preQ(0)). This chain is 7-cyano-7-deazaguanine synthase, found in Polaromonas naphthalenivorans (strain CJ2).